A 116-amino-acid chain; its full sequence is Fluoride-specific ion channel FluC 2 (116 aa).

Transmembrane regions (helical) follow at residues 3 to 23 (LLTA…RYAV) and 43 to 63 (LLFG…AVTV). Residues G67 and T70 each contribute to the Na(+) site. A helical membrane pass occupies residues 96–116 (VGTLAAALLAVFLGIALGAAL).

This sequence belongs to the fluoride channel Fluc/FEX (TC 1.A.43) family.

The protein localises to the cell membrane. It carries out the reaction fluoride(in) = fluoride(out). With respect to regulation, na(+) is not transported, but it plays an essential structural role and its presence is essential for fluoride channel function. In terms of biological role, fluoride-specific ion channel. Important for reducing fluoride concentration in the cell, thus reducing its toxicity. This is Fluoride-specific ion channel FluC 2 from Natronomonas pharaonis (strain ATCC 35678 / DSM 2160 / CIP 103997 / JCM 8858 / NBRC 14720 / NCIMB 2260 / Gabara) (Halobacterium pharaonis).